Reading from the N-terminus, the 196-residue chain is Acyl-homoserine-lactone synthase (196 aa).

Belongs to the autoinducer synthase family.

The enzyme catalyses a fatty acyl-[ACP] + S-adenosyl-L-methionine = an N-acyl-L-homoserine lactone + S-methyl-5'-thioadenosine + holo-[ACP] + H(+). Its function is as follows. Required for the synthesis of a yet unknown N-aceyl-homoserine lactone (N-aceyl-HSL), an autoinducer molecule which binds to PhzR and thus regulates phenazine production. The chain is Acyl-homoserine-lactone synthase (phzI) from Pseudomonas chlororaphis (Pseudomonas aureofaciens).